We begin with the raw amino-acid sequence, 238 residues long: Ribonuclease PH (238 aa).

Phosphate contacts are provided by residues R86 and 124–126 (GTR).

It belongs to the RNase PH family. Homohexameric ring arranged as a trimer of dimers.

It carries out the reaction tRNA(n+1) + phosphate = tRNA(n) + a ribonucleoside 5'-diphosphate. Its function is as follows. Phosphorolytic 3'-5' exoribonuclease that plays an important role in tRNA 3'-end maturation. Removes nucleotide residues following the 3'-CCA terminus of tRNAs; can also add nucleotides to the ends of RNA molecules by using nucleoside diphosphates as substrates, but this may not be physiologically important. Probably plays a role in initiation of 16S rRNA degradation (leading to ribosome degradation) during starvation. The protein is Ribonuclease PH of Geobacter metallireducens (strain ATCC 53774 / DSM 7210 / GS-15).